Reading from the N-terminus, the 368-residue chain is Alanine racemase (368 aa).

Residue K40 is the Proton acceptor; specific for D-alanine of the active site. N6-(pyridoxal phosphate)lysine is present on K40. Residue R134 participates in substrate binding. Y263 (proton acceptor; specific for L-alanine) is an active-site residue. M310 lines the substrate pocket.

Belongs to the alanine racemase family. Requires pyridoxal 5'-phosphate as cofactor.

The catalysed reaction is L-alanine = D-alanine. Its pathway is amino-acid biosynthesis; D-alanine biosynthesis; D-alanine from L-alanine: step 1/1. Catalyzes the interconversion of L-alanine and D-alanine. May also act on other amino acids. The protein is Alanine racemase (alr) of Listeria monocytogenes serotype 4a (strain HCC23).